The primary structure comprises 381 residues: L-lactate dehydrogenase (381 aa).

Positions 1 to 380 constitute an FMN hydroxy acid dehydrogenase domain; it reads MIISSASDYR…KPEALVDLSK (380 aa). Tyrosine 24 contacts substrate. FMN is bound by residues serine 106 and glutamine 127. Tyrosine 129 is a binding site for substrate. Threonine 155 is a binding site for FMN. A substrate-binding site is contributed by arginine 164. Position 251 (lysine 251) interacts with FMN. Histidine 275 functions as the Proton acceptor in the catalytic mechanism. Arginine 278 lines the substrate pocket. Residue 306–330 participates in FMN binding; sequence DSGIRNGLDIVRMLALGADATMLGR.

Belongs to the FMN-dependent alpha-hydroxy acid dehydrogenase family. FMN is required as a cofactor.

It is found in the cell inner membrane. It carries out the reaction (S)-lactate + A = pyruvate + AH2. Its function is as follows. Catalyzes the conversion of L-lactate to pyruvate. Is coupled to the respiratory chain. This is L-lactate dehydrogenase from Haemophilus influenzae (strain PittEE).